The following is a 501-amino-acid chain: COP9 signalosome complex subunit 3 (501 aa).

The 171-residue stretch at 275–445 (RFEDALFLLE…VFWTELSPVP (171 aa)) folds into the PCI domain.

This sequence belongs to the CSN3 family. Component of the CSN complex, probably composed of csn-1, csn-2, csn-3, csn-4, csn-5, csn-6 and csn-7. Within the complex it probably interacts directly with csn-2 and csn-4. May interact with itself.

The protein resides in the cytoplasm. Its subcellular location is the nucleus. Component of the COP9 signalosome complex (CSN), a complex involved in various cellular and developmental processes. The CSN complex is an essential regulator of the ubiquitin (Ubl) conjugation pathway by mediating the deneddylation of the cullin subunits of the SCF-type E3 ligase complexes, leading to decrease the Ubl ligase activity of SCF. The CSN complex plays an essential role in embryogenesis and oogenesis and is required to regulate microtubule stability in the early embryo. Mediates mei-3/katanin targeting for degradation at the meiosis to mitosis transition via deneddylation of cul-3. This Caenorhabditis elegans protein is COP9 signalosome complex subunit 3 (csn-3).